Consider the following 501-residue polypeptide: Cytochrome P450 71D6 (501 aa).

A heme-binding site is contributed by cysteine 442.

This sequence belongs to the cytochrome P450 family. It depends on heme as a cofactor.

This Solanum chacoense (Chaco potato) protein is Cytochrome P450 71D6 (CYP71D6).